The primary structure comprises 527 residues: Proline--tRNA ligase (527 aa).

Belongs to the class-II aminoacyl-tRNA synthetase family. ProS type 3 subfamily. As to quaternary structure, homodimer.

Its subcellular location is the cytoplasm. The enzyme catalyses tRNA(Pro) + L-proline + ATP = L-prolyl-tRNA(Pro) + AMP + diphosphate. Its function is as follows. Catalyzes the attachment of proline to tRNA(Pro) in a two-step reaction: proline is first activated by ATP to form Pro-AMP and then transferred to the acceptor end of tRNA(Pro). This is Proline--tRNA ligase from Sphingopyxis alaskensis (strain DSM 13593 / LMG 18877 / RB2256) (Sphingomonas alaskensis).